Reading from the N-terminus, the 174-residue chain is NADH-ubiquinone oxidoreductase chain 6 (174 aa).

Helical transmembrane passes span 25–45 (SMGLMLLIQTFLTCLITSIYV), 48–68 (FWFSYVLFLIFLGGMLILFIY), 82–102 (FSLTLISLIIFSIFTIVFFMI), and 143–163 (LITLLLINYLFLTLLVTVKIT).

Belongs to the complex I subunit 6 family.

It localises to the mitochondrion membrane. The enzyme catalyses a ubiquinone + NADH + 5 H(+)(in) = a ubiquinol + NAD(+) + 4 H(+)(out). Core subunit of the mitochondrial membrane respiratory chain NADH dehydrogenase (Complex I) that is believed to belong to the minimal assembly required for catalysis. Complex I functions in the transfer of electrons from NADH to the respiratory chain. The immediate electron acceptor for the enzyme is believed to be ubiquinone. This chain is NADH-ubiquinone oxidoreductase chain 6 (ND6), found in Anopheles albimanus (New world malaria mosquito).